The chain runs to 528 residues: Phosphoenolpyruvate carboxykinase (ATP) (528 aa).

3 residues coordinate substrate: Arg56, Tyr192, and Lys198. Residues Lys198, His217, and 233-241 contribute to the ATP site; that span reads GLSGTGKTT. Mn(2+) is bound by residues Lys198 and His217. Residue Asp254 participates in Mn(2+) binding. 3 residues coordinate ATP: Glu282, Arg319, and Thr444. Arg319 is a substrate binding site.

It belongs to the phosphoenolpyruvate carboxykinase (ATP) family. Requires Mn(2+) as cofactor.

The protein localises to the cytoplasm. It catalyses the reaction oxaloacetate + ATP = phosphoenolpyruvate + ADP + CO2. Its pathway is carbohydrate biosynthesis; gluconeogenesis. Functionally, involved in the gluconeogenesis. Catalyzes the conversion of oxaloacetate (OAA) to phosphoenolpyruvate (PEP) through direct phosphoryl transfer between the nucleoside triphosphate and OAA. The polypeptide is Phosphoenolpyruvate carboxykinase (ATP) (Bacillus pumilus (strain SAFR-032)).